The chain runs to 770 residues: Arf-GAP with coiled-coil, ANK repeat and PH domain-containing protein 2 (770 aa).

Residues 1 to 226 (MKMTVDFEEC…MKDLGAQLDR (226 aa)) enclose the BAR domain. Positions 266-361 (GIVMEGYLFK…WIKAVQTSIA (96 aa)) constitute a PH domain. Positions 371–391 (SEKLDKKSSPSTGSLDSGNES) are disordered. The span at 379-388 (SPSTGSLDSG) shows a compositional bias: polar residues. Residues Ser384 and Ser387 each carry the phosphoserine modification. The Arf-GAP domain occupies 399–520 (ESALQRVQCI…KFVDKYSALL (122 aa)). A C4-type zinc finger spans residues 414–437 (CCDCGLADPRWASINLGITLCIEC). Ser521 is modified (phosphoserine). Residues 542 to 572 (ARASVHTPVKSNDSGIQQCSEDGRESLPSTV) form a disordered region. Residues 550–561 (VKSNDSGIQQCS) are compositionally biased toward polar residues. Ser573 and Ser576 each carry phosphoserine. 3 ANK repeats span residues 632-661 (NQATPLIQAVLGGSLVTCEFLLQNGANVNQ), 665-694 (QGRGPLHHATVLGHTGQVCLFLKRGANQHA), and 698-727 (EGKDPLSIAVEAANADIVTLLRLARMNEEM). Tyr734 carries the post-translational modification Phosphotyrosine. Ser767 carries the phosphoserine modification.

Interacts with RAB35 (GTP-bound form); the interaction is direct and probably recruits ACAP2 to membranes. Interacts with MICALL1; the interaction is indirect through RAB35.

Its subcellular location is the endosome membrane. It is found in the cell membrane. GAP activity stimulated by phosphatidylinositol 4,5-bisphosphate (PIP2) and phosphatidic acid. GTPase-activating protein (GAP) for ADP ribosylation factor 6 (ARF6). Doesn't show GAP activity for RAB35. This is Arf-GAP with coiled-coil, ANK repeat and PH domain-containing protein 2 (Acap2) from Mus musculus (Mouse).